The sequence spans 391 residues: Pyruvate dehydrogenase E1 component subunit alpha, mitochondrial (391 aa).

Residues 1-26 constitute a mitochondrion transit peptide; it reads MALSTSRAINHIMKPLSAAVCATRRL. Residues His92, Tyr118, Arg119, Gly167, Val169, Asp198, Gly199, Ala200, Asn227, and Tyr229 each coordinate pyruvate. Positions 118, 119, 167, 169, 198, 199, 200, and 227 each coordinate thiamine diphosphate. Residue Asp198 participates in Mg(2+) binding. Residues Asn227 and Tyr229 each contribute to the Mg(2+) site. His293 provides a ligand contact to thiamine diphosphate. The disordered stretch occupies residues 294–313; the sequence is SMSDPGSTYRTRDEISGVRQ. The span at 303-313 shows a compositional bias: basic and acidic residues; the sequence is RTRDEISGVRQ.

As to quaternary structure, tetramer of 2 alpha and 2 beta subunits. Requires thiamine diphosphate as cofactor. Mg(2+) serves as cofactor.

It localises to the mitochondrion matrix. It catalyses the reaction N(6)-[(R)-lipoyl]-L-lysyl-[protein] + pyruvate + H(+) = N(6)-[(R)-S(8)-acetyldihydrolipoyl]-L-lysyl-[protein] + CO2. With respect to regulation, E1 activity is regulated by phosphorylation (inactivation) and dephosphorylation (activation) of the alpha subunit. Its function is as follows. The pyruvate dehydrogenase complex catalyzes the overall conversion of pyruvate to acetyl-CoA and CO(2). It contains multiple copies of three enzymatic components: pyruvate dehydrogenase (E1), dihydrolipoamide acetyltransferase (E2) and lipoamide dehydrogenase (E3). This chain is Pyruvate dehydrogenase E1 component subunit alpha, mitochondrial, found in Solanum tuberosum (Potato).